A 238-amino-acid chain; its full sequence is DNA repair protein RecO (238 aa).

The protein belongs to the RecO family.

In terms of biological role, involved in DNA repair and RecF pathway recombination. In Aliivibrio fischeri (strain ATCC 700601 / ES114) (Vibrio fischeri), this protein is DNA repair protein RecO.